The sequence spans 212 residues: Pyrrolidone-carboxylate peptidase (212 aa).

Catalysis depends on residues Glu-78, Cys-141, and His-165.

Belongs to the peptidase C15 family. Homotetramer.

It is found in the cytoplasm. The enzyme catalyses Release of an N-terminal pyroglutamyl group from a polypeptide, the second amino acid generally not being Pro.. Removes 5-oxoproline from various penultimate amino acid residues except L-proline. This is Pyrrolidone-carboxylate peptidase from Staphylococcus aureus (strain bovine RF122 / ET3-1).